We begin with the raw amino-acid sequence, 515 residues long: MEELQGYLEEDRSRQQQFLYPLLFQEYIYVFAYDHGLNSSIFYEPQNSLGYDNKFSSVLVKRLIIRMYQKNYLIYSVNDIYQNIFVGHNNYFYFNFFSQILSEGFAVIVEIPFSLQLISSLEEKEIPKSHNLQSSHSIFPFLEDKLLHLNYLSDILIPYPVHMEILVQILQSWIQDVLSLHLLQFLLHEYYNWNSLIIPKKSIYVFSKENKRLFWFLYNLYIYEYEFLLVFPCKQSSFLRLISSGVLLERIHFYVKIEHLGVYRIFCQKTLWIFKDPFIHYIRYQGKSILGSRGTHFLMKKWKYHLVNFWQYYFHFWSQPYRIDIKKLSNYSFYFLGYFSSVQINSSMVRNQMLENSFLMDTLTKKFDTIIPIIPLIRSLFKAQFCTVSGYPISKPIWTDLADCDIINRFGRICRKLTHYHSGSSKKQSLYRMKYILRLSCARTLARKHKSSARSFLQRLSSGLLEEFFTEEEQVIFLIFPKIISFYLYGSYRERIWYLDIIRINDLVNCLLVTT.

This sequence belongs to the intron maturase 2 family. MatK subfamily.

Its subcellular location is the plastid. The protein resides in the chloroplast. In terms of biological role, usually encoded in the trnK tRNA gene intron. Probably assists in splicing its own and other chloroplast group II introns. In Zingiber officinale (Ginger), this protein is Maturase K.